We begin with the raw amino-acid sequence, 154 residues long: Transcriptional repressor NrdR (154 aa).

Residues 3-34 (CPFCNAPDTKVIDSRLATEGAQVRRRRECMSC) fold into a zinc finger. Residues 49–139 (PRVIKSDGNR…VYRSFQDVNA (91 aa)) enclose the ATP-cone domain.

This sequence belongs to the NrdR family. Requires Zn(2+) as cofactor.

Its function is as follows. Negatively regulates transcription of bacterial ribonucleotide reductase nrd genes and operons by binding to NrdR-boxes. This is Transcriptional repressor NrdR from Hydrogenovibrio crunogenus (strain DSM 25203 / XCL-2) (Thiomicrospira crunogena).